Here is a 582-residue protein sequence, read N- to C-terminus: 2-succinyl-5-enolpyruvyl-6-hydroxy-3-cyclohexene-1-carboxylate synthase (582 aa).

Belongs to the TPP enzyme family. MenD subfamily. As to quaternary structure, homodimer. The cofactor is Mg(2+). Mn(2+) serves as cofactor. Thiamine diphosphate is required as a cofactor.

The catalysed reaction is isochorismate + 2-oxoglutarate + H(+) = 5-enolpyruvoyl-6-hydroxy-2-succinyl-cyclohex-3-ene-1-carboxylate + CO2. It participates in quinol/quinone metabolism; 1,4-dihydroxy-2-naphthoate biosynthesis; 1,4-dihydroxy-2-naphthoate from chorismate: step 2/7. The protein operates within cofactor biosynthesis; phylloquinone biosynthesis. Catalyzes the thiamine diphosphate-dependent decarboxylation of 2-oxoglutarate and the subsequent addition of the resulting succinic semialdehyde-thiamine pyrophosphate anion to isochorismate to yield 2-succinyl-5-enolpyruvyl-6-hydroxy-3-cyclohexene-1-carboxylate (SEPHCHC). This chain is 2-succinyl-5-enolpyruvyl-6-hydroxy-3-cyclohexene-1-carboxylate synthase, found in Prochlorococcus marinus (strain MIT 9303).